The chain runs to 160 residues: Gene 34 protein (160 aa).

Positions 1–11 (MDSPRGISTAT) are enriched in polar residues. Residues 1–26 (MDSPRGISTATGDAHAEAAVSPAAEI) form a disordered region.

The chain is Gene 34 protein from Equus caballus (Horse).